The sequence spans 397 residues: Flavohemoprotein A (397 aa).

The Globin domain maps to 2–137; the sequence is SLSQQSISII…IAQAFIDAEA (136 aa). His84 lines the heme b pocket. Residues Tyr94 and Glu136 each act as charge relay system in the active site. The segment at 150-397 is reductase; it reads WRDTREFIVD…YEIFGPLTNV (248 aa). The FAD-binding FR-type domain maps to 151–266; sequence RDTREFIVDR…SPPAGDYVVD (116 aa). Residues Tyr189 and 208-211 each bind FAD; that span reads RHYS. An NADP(+)-binding site is contributed by 279-284; sequence GVGITP. 390–393 contacts FAD; the sequence is IFGP.

This sequence belongs to the globin family. Two-domain flavohemoproteins subfamily. In the C-terminal section; belongs to the flavoprotein pyridine nucleotide cytochrome reductase family. FAD is required as a cofactor. It depends on heme b as a cofactor.

Its subcellular location is the cytoplasm. It catalyses the reaction 2 nitric oxide + NADPH + 2 O2 = 2 nitrate + NADP(+) + H(+). It carries out the reaction 2 nitric oxide + NADH + 2 O2 = 2 nitrate + NAD(+) + H(+). Functionally, is involved in NO detoxification in an aerobic process, termed nitric oxide dioxygenase (NOD) reaction that utilizes O(2) and NAD(P)H to convert NO to nitrate, which protects the cell from various noxious nitrogen compounds. Therefore, plays a central role in the inducible response to nitrosative stress. In the presence of oxygen and NADH, it has NADH oxidase activity, which leads to the generation of superoxide and H(2)O(2). Under anaerobic conditions, it also exhibits nitric oxide reductase and FAD reductase activities. However, all these reactions are much lower than NOD activity. This is Flavohemoprotein A (fhbA) from Dictyostelium discoideum (Social amoeba).